A 215-amino-acid chain; its full sequence is HTH-type transcriptional repressor FabR (215 aa).

In terms of domain architecture, HTH tetR-type spans 10–70 (KTRRSLVEAA…TMVDESGLML (61 aa)). Residues 33–52 (SLREVAREAGIAPTSFYRHF) constitute a DNA-binding region (H-T-H motif).

As to quaternary structure, homodimer.

The protein localises to the cytoplasm. Represses the transcription of fabB, involved in unsaturated fatty acid (UFA) biosynthesis. By controlling UFA production, FabR directly influences the physical properties of the membrane bilayer. The chain is HTH-type transcriptional repressor FabR from Escherichia coli O9:H4 (strain HS).